Here is a 667-residue protein sequence, read N- to C-terminus: Probable Na(+)/H(+) antiporter nhx-9 (667 aa).

The next 8 membrane-spanning stretches (helical) occupy residues 41–61, 73–93, 97–117, 128–148, 165–185, 192–212, 236–256, and 268–288; these read VYVITVWLLIASLAKILFNLM, LLIIVGLALGWILHQTSLSGA, SHTFFLYLLPPIIFDAGYFMP, VLVFSVFGTIWNTFAIGGSLL, ILVFSALISAVDPVAVIAVFE, FLFINVFGEALFNDGVTVVLY, LSFFVVALGGAAVGIIFAIAA, and ILAPVFIFVLPYMAYLTAEMV. N-linked (GlcNAc...) asparagine glycosylation occurs at Asn310. The next 4 helical transmembrane spans lie at 325–345, 351–371, 390–410, and 418–438; these read MLAQSSETVIFMFLGLSTISS, LYFICATLFFCLIYRAIGIVV, FIMSYGGLRGAIAYGLVVSIP, and MFITATIAVIYFTVFLQGITI. The interval 637 to 667 is disordered; sequence TEQLPSETPFHSGRRQSTGDLNATRRADFNV. Thr644 bears the Phosphothreonine mark.

It belongs to the monovalent cation:proton antiporter 1 (CPA1) transporter (TC 2.A.36) family. Phosphorylated. In early stage larva, expressed in the twin excretory cell processes. At later larval stages, expression is more restricted, resulting in a 'beads on a chain' appearance.

It is found in the cell membrane. Its function is as follows. Serves some physiological function other than regulation of cellular pH. The sequence is that of Probable Na(+)/H(+) antiporter nhx-9 (nhx-9) from Caenorhabditis elegans.